Reading from the N-terminus, the 500-residue chain is Aspartyl/glutamyl-tRNA(Asn/Gln) amidotransferase subunit B (500 aa).

It belongs to the GatB/GatE family. GatB subfamily. As to quaternary structure, heterotrimer of A, B and C subunits.

The catalysed reaction is L-glutamyl-tRNA(Gln) + L-glutamine + ATP + H2O = L-glutaminyl-tRNA(Gln) + L-glutamate + ADP + phosphate + H(+). It catalyses the reaction L-aspartyl-tRNA(Asn) + L-glutamine + ATP + H2O = L-asparaginyl-tRNA(Asn) + L-glutamate + ADP + phosphate + 2 H(+). Allows the formation of correctly charged Asn-tRNA(Asn) or Gln-tRNA(Gln) through the transamidation of misacylated Asp-tRNA(Asn) or Glu-tRNA(Gln) in organisms which lack either or both of asparaginyl-tRNA or glutaminyl-tRNA synthetases. The reaction takes place in the presence of glutamine and ATP through an activated phospho-Asp-tRNA(Asn) or phospho-Glu-tRNA(Gln). The protein is Aspartyl/glutamyl-tRNA(Asn/Gln) amidotransferase subunit B of Rhizobium johnstonii (strain DSM 114642 / LMG 32736 / 3841) (Rhizobium leguminosarum bv. viciae).